The following is a 224-amino-acid chain: UPF0758 protein Psyr_0222 (224 aa).

Residues 102-224 (ALENPTQVRS…PLSMVERGLM (123 aa)) form the MPN domain. Zn(2+) contacts are provided by H173, H175, and D186. Residues 173–186 (HNHPSGITTPSRSD) carry the JAMM motif motif.

Belongs to the UPF0758 family.

The chain is UPF0758 protein Psyr_0222 from Pseudomonas syringae pv. syringae (strain B728a).